Here is a 445-residue protein sequence, read N- to C-terminus: FAS-associated factor 2 (445 aa).

Position 2 is an N-acetylalanine (A2). One can recognise a UBA domain in the interval 12–48; the sequence is EQTEKLLQFQDLTGIESMEQCRLALEQHNWNMEAAVQ. Residue K167 is modified to N6-acetyllysine. The stretch at 275–350 forms a coiled coil; it reads SERLEREERN…EEKERKLECL (76 aa). The disordered stretch occupies residues 300 to 361; it reads SLRADQEKER…PEPSPDDPES (62 aa). Basic and acidic residues predominate over residues 303–348; sequence ADQEKERKKREEKERKRRKEEEVQQQKLAEERRRQNLQEEKERKLE. The region spanning 357–439 is the UBX domain; the sequence is DDPESVKIIF…GLSHTEVLFV (83 aa).

Identified in a complex that contains SEL1L, OS9, FAF2/UBXD8, UBE2J1/UBC6E and AUP1. Interacts with YOD1. Interacts (via N-terminus) with UBQLN2 (via C-terminus). Interacts with PNPLA2. Interacts with ZFAND2B; probably through VCP. Interacts with LMBR1L and UBAC2.

Its subcellular location is the cytoplasm. The protein resides in the lipid droplet. The protein localises to the endoplasmic reticulum. Its function is as follows. Plays an important role in endoplasmic reticulum-associated degradation (ERAD) that mediates ubiquitin-dependent degradation of misfolded endoplasmic reticulum proteins. By controlling the steady-state expression of the IGF1R receptor, indirectly regulates the insulin-like growth factor receptor signaling pathway. Involved in inhibition of lipid droplet degradation by binding to phospholipase PNPL2 and inhibiting its activity by promoting dissociation of PNPL2 from its endogenous activator, ABHD5 which inhibits the rate of triacylglycerol hydrolysis. Involved in stress granule disassembly: associates with ubiquitinated G3BP1 in response to heat shock, thereby promoting interaction between ubiquitinated G3BP1 and VCP, followed by G3BP1 extraction from stress granules and stress granule disassembly. In Mus musculus (Mouse), this protein is FAS-associated factor 2 (Faf2).